A 208-amino-acid chain; its full sequence is Heat shock protein 26 (208 aa).

S44, S52, and S58 each carry phosphoserine. Residues 71–179 (ANRNDIHWPA…KSKERIIQIQ (109 aa)) form the sHSP domain. Positions 187 to 208 (NVKANESEVKGKENGAPNGKDK) are disordered. A compositionally biased stretch (basic and acidic residues) spans 191-208 (NESEVKGKENGAPNGKDK).

It belongs to the small heat shock protein (HSP20) family.

The sequence is that of Heat shock protein 26 (Hsp26) from Drosophila melanogaster (Fruit fly).